Consider the following 646-residue polypeptide: Chaperone protein DnaK (646 aa).

Residue Thr197 is modified to Phosphothreonine; by autocatalysis. A disordered region spans residues 599–646 (QQGAQAGADPNAGSSQGAQAGTDYGTSGPKTGTADDVDYEVVNDDNDK). Residues 610–628 (AGSSQGAQAGTDYGTSGPK) are compositionally biased toward polar residues. The span at 633–646 (DDVDYEVVNDDNDK) shows a compositional bias: acidic residues.

Belongs to the heat shock protein 70 family.

Functionally, acts as a chaperone. The polypeptide is Chaperone protein DnaK (Treponema denticola (strain ATCC 35405 / DSM 14222 / CIP 103919 / JCM 8153 / KCTC 15104)).